The chain runs to 476 residues: Serine/threonine-protein kinase PBL36 (476 aa).

One can recognise a Protein kinase domain in the interval 126 to 412 (FRPESLLGEG…VEALKPLPNL (287 aa)). ATP is bound by residues 132–140 (LGEGGFGCV) and Lys-164. Tyr-209 is subject to Phosphotyrosine. Asp-259 acts as the Proton acceptor in catalysis. A phosphoserine mark is found at Ser-263 and Ser-293. 2 positions are modified to phosphothreonine: Thr-294 and Thr-299. A Phosphotyrosine modification is found at Tyr-307. The interval 431-476 (NGVRTQGGGFVSRNGPPMRSLSSLNLPQASPYRYARQSPKPKGKEP) is disordered.

Belongs to the protein kinase superfamily. Ser/Thr protein kinase family. As to quaternary structure, interacts with SD129. Phosphorylated by SD129 in response to the pathogen-associated molecular pattern (PAMP) 3-OH-C10:0, a medium-chain 3-hydroxy fatty acid.

It is found in the cell membrane. It carries out the reaction L-seryl-[protein] + ATP = O-phospho-L-seryl-[protein] + ADP + H(+). It catalyses the reaction L-threonyl-[protein] + ATP = O-phospho-L-threonyl-[protein] + ADP + H(+). Involved in chitin-triggered immune signaling and is required for reactive oxygen species (ROS) production. Acts downstream of SD129 in defense signaling triggered by the pathogen-associated molecular pattern (PAMP) 3-OH-C10:0, a medium-chain 3-hydroxy fatty acid. The chain is Serine/threonine-protein kinase PBL36 from Arabidopsis thaliana (Mouse-ear cress).